A 176-amino-acid chain; its full sequence is RNA pyrophosphohydrolase (176 aa).

The Nudix hydrolase domain occupies 6–149 (GYRPNVGIVI…KRDVYRRVMK (144 aa)). The Nudix box motif lies at 38–59 (GGINPGESPEQAMYRELYEEVG).

The protein belongs to the Nudix hydrolase family. RppH subfamily. The cofactor is a divalent metal cation.

Functionally, accelerates the degradation of transcripts by removing pyrophosphate from the 5'-end of triphosphorylated RNA, leading to a more labile monophosphorylated state that can stimulate subsequent ribonuclease cleavage. This is RNA pyrophosphohydrolase from Photorhabdus laumondii subsp. laumondii (strain DSM 15139 / CIP 105565 / TT01) (Photorhabdus luminescens subsp. laumondii).